The sequence spans 345 residues: Tyrosine-binding protein (345 aa).

An N-terminal signal peptide occupies residues 1–23 (MIKSKKILSLIIAGVLGVSMLTG). Cys-24 carries N-palmitoyl cysteine lipidation. Cys-24 carries S-diacylglycerol cysteine lipidation.

The complex is probably composed of two ATP-binding proteins (CDR20291_0806), two transmembrane proteins (CDR20291_0807) and a solute-binding protein (CDR20291_0805).

The protein localises to the cell membrane. Probably part of an ABC transporter complex involved in tyrosine uptake. May also import phenylalanine. This chain is Tyrosine-binding protein, found in Clostridioides difficile (strain R20291) (Peptoclostridium difficile).